The following is a 92-amino-acid chain: Small ribosomal subunit protein uS17 (92 aa).

It belongs to the universal ribosomal protein uS17 family. As to quaternary structure, part of the 30S ribosomal subunit.

Functionally, one of the primary rRNA binding proteins, it binds specifically to the 5'-end of 16S ribosomal RNA. This Bordetella petrii (strain ATCC BAA-461 / DSM 12804 / CCUG 43448) protein is Small ribosomal subunit protein uS17.